A 78-amino-acid polypeptide reads, in one-letter code: UPF0349 protein BPUM_2879 (78 aa).

The protein belongs to the UPF0349 family.

This Bacillus pumilus (strain SAFR-032) protein is UPF0349 protein BPUM_2879.